The chain runs to 513 residues: uncharacterized protein (513 aa).

A run of 13 helical transmembrane segments spans residues 3–23 (MTAFLLFLAIVGLTLIITYFA), 47–67 (LAIAGDYMSAASFLGIAGMIA), 71–91 (FDGFFYSIGFLVAYLVVLYIV), 129–149 (TFYMIAQLVGAGALIKLLLGL), 153–173 (AAVLIVGVLMTIYVVFGGMIA), 177–197 (VQIIKAVLLMAGTLVISIIVF), 233–253 (ETLSLNLALVLGTAGLPHILI), 273–293 (WIIGVFYIMTVFLGFGAAAFV), 320–340 (FLFAFVSAIAFATILAVVTGL), 374–394 (ASVAVSVLSILLAIFAQSLNV), 395–415 (AFLVALAFAVAASANLPLIVF), 424–444 (ASGALWGSLTGLISALVLVSM), and 462–482 (LIPLSNPGIISIPLGFLGAWL).

It belongs to the sodium:solute symporter (SSF) (TC 2.A.21) family.

The protein localises to the cell membrane. This is an uncharacterized protein from Bacillus subtilis (strain 168).